Reading from the N-terminus, the 477-residue chain is Aspartyl/glutamyl-tRNA(Asn/Gln) amidotransferase subunit B (477 aa).

It belongs to the GatB/GatE family. GatB subfamily. As to quaternary structure, heterotrimer of A, B and C subunits.

It catalyses the reaction L-glutamyl-tRNA(Gln) + L-glutamine + ATP + H2O = L-glutaminyl-tRNA(Gln) + L-glutamate + ADP + phosphate + H(+). The catalysed reaction is L-aspartyl-tRNA(Asn) + L-glutamine + ATP + H2O = L-asparaginyl-tRNA(Asn) + L-glutamate + ADP + phosphate + 2 H(+). In terms of biological role, allows the formation of correctly charged Asn-tRNA(Asn) or Gln-tRNA(Gln) through the transamidation of misacylated Asp-tRNA(Asn) or Glu-tRNA(Gln) in organisms which lack either or both of asparaginyl-tRNA or glutaminyl-tRNA synthetases. The reaction takes place in the presence of glutamine and ATP through an activated phospho-Asp-tRNA(Asn) or phospho-Glu-tRNA(Gln). In Methylobacillus flagellatus (strain ATCC 51484 / DSM 6875 / VKM B-1610 / KT), this protein is Aspartyl/glutamyl-tRNA(Asn/Gln) amidotransferase subunit B.